An 82-amino-acid chain; its full sequence is Putative membrane protein insertion efficiency factor (82 aa).

The protein belongs to the UPF0161 family.

Its subcellular location is the cell inner membrane. Its function is as follows. Could be involved in insertion of integral membrane proteins into the membrane. The sequence is that of Putative membrane protein insertion efficiency factor from Francisella tularensis subsp. holarctica (strain LVS).